We begin with the raw amino-acid sequence, 154 residues long: Large ribosomal subunit protein uL30 (154 aa).

This sequence belongs to the universal ribosomal protein uL30 family. In terms of assembly, part of the 50S ribosomal subunit.

The polypeptide is Large ribosomal subunit protein uL30 (Methanococcus maripaludis (strain C5 / ATCC BAA-1333)).